A 480-amino-acid polypeptide reads, in one-letter code: Glutamyl-tRNA(Gln) amidotransferase subunit A (480 aa).

Active-site charge relay system residues include Lys-76 and Ser-151. Catalysis depends on Ser-175, which acts as the Acyl-ester intermediate.

Belongs to the amidase family. GatA subfamily. Heterotrimer of A, B and C subunits.

The catalysed reaction is L-glutamyl-tRNA(Gln) + L-glutamine + ATP + H2O = L-glutaminyl-tRNA(Gln) + L-glutamate + ADP + phosphate + H(+). Its function is as follows. Allows the formation of correctly charged Gln-tRNA(Gln) through the transamidation of misacylated Glu-tRNA(Gln) in organisms which lack glutaminyl-tRNA synthetase. The reaction takes place in the presence of glutamine and ATP through an activated gamma-phospho-Glu-tRNA(Gln). This Exiguobacterium sp. (strain ATCC BAA-1283 / AT1b) protein is Glutamyl-tRNA(Gln) amidotransferase subunit A.